The following is an 874-amino-acid chain: Alanine--tRNA ligase (874 aa).

4 residues coordinate Zn(2+): H564, H568, C665, and H669.

The protein belongs to the class-II aminoacyl-tRNA synthetase family. It depends on Zn(2+) as a cofactor.

The protein localises to the cytoplasm. It catalyses the reaction tRNA(Ala) + L-alanine + ATP = L-alanyl-tRNA(Ala) + AMP + diphosphate. Functionally, catalyzes the attachment of alanine to tRNA(Ala) in a two-step reaction: alanine is first activated by ATP to form Ala-AMP and then transferred to the acceptor end of tRNA(Ala). Also edits incorrectly charged Ser-tRNA(Ala) and Gly-tRNA(Ala) via its editing domain. This chain is Alanine--tRNA ligase, found in Burkholderia multivorans (strain ATCC 17616 / 249).